The primary structure comprises 564 residues: CTP synthase (564 aa).

The amidoligase domain stretch occupies residues 1-265 (MTKFVFVTGG…DEIVCHRLDI (265 aa)). S13 lines the CTP pocket. S13 lines the UTP pocket. Residues 14–19 (SLGKGI) and D71 each bind ATP. The Mg(2+) site is built by D71 and E139. CTP-binding positions include 146-148 (DIE), 186-191 (KTKPTQ), and K222. Residues 186–191 (KTKPTQ) and K222 each bind UTP. The 254-residue stretch at 290–543 (SIALVGKYVD…IQAAISFAGQ (254 aa)) folds into the Glutamine amidotransferase type-1 domain. G351 provides a ligand contact to L-glutamine. C378 (nucleophile; for glutamine hydrolysis) is an active-site residue. L-glutamine is bound by residues 379–382 (LGMQ), E402, and R469. Catalysis depends on residues H516 and E518.

This sequence belongs to the CTP synthase family. Homotetramer.

It carries out the reaction UTP + L-glutamine + ATP + H2O = CTP + L-glutamate + ADP + phosphate + 2 H(+). It catalyses the reaction L-glutamine + H2O = L-glutamate + NH4(+). The enzyme catalyses UTP + NH4(+) + ATP = CTP + ADP + phosphate + 2 H(+). Its pathway is pyrimidine metabolism; CTP biosynthesis via de novo pathway; CTP from UDP: step 2/2. With respect to regulation, allosterically activated by GTP, when glutamine is the substrate; GTP has no effect on the reaction when ammonia is the substrate. The allosteric effector GTP functions by stabilizing the protein conformation that binds the tetrahedral intermediate(s) formed during glutamine hydrolysis. Inhibited by the product CTP, via allosteric rather than competitive inhibition. Catalyzes the ATP-dependent amination of UTP to CTP with either L-glutamine or ammonia as the source of nitrogen. Regulates intracellular CTP levels through interactions with the four ribonucleotide triphosphates. This Nitrosomonas europaea (strain ATCC 19718 / CIP 103999 / KCTC 2705 / NBRC 14298) protein is CTP synthase.